Reading from the N-terminus, the 202-residue chain is FMN-dependent NADH:quinone oxidoreductase (202 aa).

FMN contacts are provided by residues S10, 16–18 (SHS), and 96–99 (MYNF).

The protein belongs to the azoreductase type 1 family. Homodimer. Requires FMN as cofactor.

It catalyses the reaction 2 a quinone + NADH + H(+) = 2 a 1,4-benzosemiquinone + NAD(+). The enzyme catalyses N,N-dimethyl-1,4-phenylenediamine + anthranilate + 2 NAD(+) = 2-(4-dimethylaminophenyl)diazenylbenzoate + 2 NADH + 2 H(+). In terms of biological role, quinone reductase that provides resistance to thiol-specific stress caused by electrophilic quinones. Its function is as follows. Also exhibits azoreductase activity. Catalyzes the reductive cleavage of the azo bond in aromatic azo compounds to the corresponding amines. The chain is FMN-dependent NADH:quinone oxidoreductase from Hydrogenovibrio crunogenus (strain DSM 25203 / XCL-2) (Thiomicrospira crunogena).